The following is a 200-amino-acid chain: dITP/XTP pyrophosphatase (200 aa).

8–13 lines the substrate pocket; sequence TGNQGK. The active-site Proton acceptor is the Asp-69. Asp-69 serves as a coordination point for Mg(2+). Substrate is bound by residues Ser-70, 154-157, Lys-177, and 182-183; these read FGYD and HR.

It belongs to the HAM1 NTPase family. In terms of assembly, homodimer. Mg(2+) is required as a cofactor.

The catalysed reaction is XTP + H2O = XMP + diphosphate + H(+). The enzyme catalyses dITP + H2O = dIMP + diphosphate + H(+). It catalyses the reaction ITP + H2O = IMP + diphosphate + H(+). Functionally, pyrophosphatase that catalyzes the hydrolysis of nucleoside triphosphates to their monophosphate derivatives, with a high preference for the non-canonical purine nucleotides XTP (xanthosine triphosphate), dITP (deoxyinosine triphosphate) and ITP. Seems to function as a house-cleaning enzyme that removes non-canonical purine nucleotides from the nucleotide pool, thus preventing their incorporation into DNA/RNA and avoiding chromosomal lesions. This chain is dITP/XTP pyrophosphatase, found in Vibrio vulnificus (strain CMCP6).